The sequence spans 181 residues: Acireductone dioxygenase (181 aa).

A compositionally biased stretch (acidic residues) spans 1–10 (MRAYIYDEES). Positions 1-23 (MRAYIYDEESQLSPQDEHESSQS) are disordered. Residues His-82, His-84, Glu-88, and His-128 each coordinate Fe(2+). Positions 82, 84, 88, and 128 each coordinate Ni(2+).

This sequence belongs to the acireductone dioxygenase (ARD) family. Fe(2+) is required as a cofactor. It depends on Ni(2+) as a cofactor.

It is found in the cytoplasm. The protein resides in the nucleus. The catalysed reaction is 1,2-dihydroxy-5-(methylsulfanyl)pent-1-en-3-one + O2 = 4-methylsulfanyl-2-oxobutanoate + formate + 2 H(+). The enzyme catalyses 1,2-dihydroxy-5-(methylsulfanyl)pent-1-en-3-one + O2 = 3-(methylsulfanyl)propanoate + CO + formate + 2 H(+). The protein operates within amino-acid biosynthesis; L-methionine biosynthesis via salvage pathway; L-methionine from S-methyl-5-thio-alpha-D-ribose 1-phosphate: step 5/6. Its function is as follows. Catalyzes 2 different reactions between oxygen and the acireductone 1,2-dihydroxy-3-keto-5-methylthiopentene (DHK-MTPene) depending upon the metal bound in the active site. Fe-containing acireductone dioxygenase (Fe-ARD) produces formate and 2-keto-4-methylthiobutyrate (KMTB), the alpha-ketoacid precursor of methionine in the methionine recycle pathway. Ni-containing acireductone dioxygenase (Ni-ARD) produces methylthiopropionate, carbon monoxide and formate, and does not lie on the methionine recycle pathway. The polypeptide is Acireductone dioxygenase (Puccinia graminis f. sp. tritici (strain CRL 75-36-700-3 / race SCCL) (Black stem rust fungus)).